Reading from the N-terminus, the 488-residue chain is UDP-N-acetylmuramoyl-L-alanyl-D-glutamate--2,6-diaminopimelate ligase (488 aa).

Ser31 provides a ligand contact to UDP-N-acetyl-alpha-D-muramoyl-L-alanyl-D-glutamate. Residue 109–115 (GTNGKTS) participates in ATP binding. UDP-N-acetyl-alpha-D-muramoyl-L-alanyl-D-glutamate is bound by residues Asn150, 151–152 (TT), Ser178, and Arg186. An N6-carboxylysine modification is found at Lys218. Meso-2,6-diaminopimelate contacts are provided by residues Arg384, 408–411 (DNPR), Gly458, and Glu462. The Meso-diaminopimelate recognition motif signature appears at 408-411 (DNPR).

It belongs to the MurCDEF family. MurE subfamily. The cofactor is Mg(2+). In terms of processing, carboxylation is probably crucial for Mg(2+) binding and, consequently, for the gamma-phosphate positioning of ATP.

Its subcellular location is the cytoplasm. It catalyses the reaction UDP-N-acetyl-alpha-D-muramoyl-L-alanyl-D-glutamate + meso-2,6-diaminopimelate + ATP = UDP-N-acetyl-alpha-D-muramoyl-L-alanyl-gamma-D-glutamyl-meso-2,6-diaminopimelate + ADP + phosphate + H(+). Its pathway is cell wall biogenesis; peptidoglycan biosynthesis. In terms of biological role, catalyzes the addition of meso-diaminopimelic acid to the nucleotide precursor UDP-N-acetylmuramoyl-L-alanyl-D-glutamate (UMAG) in the biosynthesis of bacterial cell-wall peptidoglycan. The sequence is that of UDP-N-acetylmuramoyl-L-alanyl-D-glutamate--2,6-diaminopimelate ligase from Bacillus licheniformis (strain ATCC 14580 / DSM 13 / JCM 2505 / CCUG 7422 / NBRC 12200 / NCIMB 9375 / NCTC 10341 / NRRL NRS-1264 / Gibson 46).